We begin with the raw amino-acid sequence, 263 residues long: Probable endonuclease lcl3 (263 aa).

Residues 1–21 form a disordered region; that stretch reads MGWLDFSSKSKKEEKDDTRPS. The span at 8–19 shows a compositional bias: basic and acidic residues; that stretch reads SKSKKEEKDDTR. The chain crosses the membrane as a helical span at residues 41–59; that stretch reads TVIPTILLTTTILVSTRLY. The 161-residue stretch at 80–240 folds into the TNase-like domain; sequence RSLFGTVTRV…KKKKLGMWSG (161 aa). Arg131 is an active-site residue. Residue Asp136 participates in Ca(2+) binding. Active-site residues include Glu139 and Arg179. A disordered region spans residues 236 to 263; that stretch reads GMWSGKKKDYESPRDYKTRTANAAKMLK. Basic and acidic residues predominate over residues 241–253; the sequence is KKKDYESPRDYKT.

It belongs to the LCL3 family.

The protein localises to the mitochondrion. Its subcellular location is the membrane. This Botryotinia fuckeliana (strain B05.10) (Noble rot fungus) protein is Probable endonuclease lcl3 (lcl3).